Consider the following 319-residue polypeptide: HTH-type transcriptional regulator YidZ (319 aa).

An HTH lysR-type domain is found at 8–65 (LDLNLLLCLQLLMQERSVTKAAKRMNVTPSAVSKSLSKLRTWFDDPLFVNTPLGLTPT). A DNA-binding region (H-T-H motif) is located at residues 25 to 44 (VTKAAKRMNVTPSAVSKSLS).

This sequence belongs to the LysR transcriptional regulatory family.

Involved in anaerobic NO protection. This Citrobacter koseri (strain ATCC BAA-895 / CDC 4225-83 / SGSC4696) protein is HTH-type transcriptional regulator YidZ.